Here is a 106-residue protein sequence, read N- to C-terminus: Small ribosomal subunit protein bS16 (106 aa).

It belongs to the bacterial ribosomal protein bS16 family.

The protein is Small ribosomal subunit protein bS16 of Wolbachia pipientis wMel.